Here is a 28-residue protein sequence, read N- to C-terminus: U1-poneritoxin-Da4a (28 aa).

The residue at position 28 (A28) is an Alanine amide.

Expressed by the venom gland.

The protein localises to the secreted. Its function is as follows. Shows a broad spectrum of activity against both Gram-positive and Gram-negative bacteria. Also has antimicrobial activity against S.cerevisiae. Has insecticidal and non-hemolytic activity. The protein is U1-poneritoxin-Da4a of Dinoponera australis (Giant neotropical hunting ant).